A 232-amino-acid polypeptide reads, in one-letter code: Ribose-5-phosphate isomerase A (232 aa).

Substrate contacts are provided by residues 28 to 31, 83 to 86, and 96 to 99; these read TGST, DGAD, and KGGG. The Proton acceptor role is filled by E105. K123 lines the substrate pocket.

Belongs to the ribose 5-phosphate isomerase family. As to quaternary structure, homodimer.

The catalysed reaction is aldehydo-D-ribose 5-phosphate = D-ribulose 5-phosphate. It functions in the pathway carbohydrate degradation; pentose phosphate pathway; D-ribose 5-phosphate from D-ribulose 5-phosphate (non-oxidative stage): step 1/1. Functionally, catalyzes the reversible conversion of ribose-5-phosphate to ribulose 5-phosphate. This chain is Ribose-5-phosphate isomerase A, found in Rhodopseudomonas palustris (strain ATCC BAA-98 / CGA009).